A 758-amino-acid polypeptide reads, in one-letter code: Actin filament-associated protein 1-like 1 (758 aa).

The tract at residues 91 to 194 (YRDSSENLSC…YESYDEEDEE (104 aa)) is disordered. The segment covering 102–120 (LPPPPSAPPPPLPTTPPPE) has biased composition (pro residues). Residues 137–148 (YITSRNSSSPPN) show a composition bias toward polar residues. Residues 177–186 (ESDGLSSSYE) show a composition bias toward low complexity. A PH 1 domain is found at 216 to 312 (DSRICAFLLR…WLRVIKEVIS (97 aa)). The interval 335-369 (SHDKTSDSDSAANGENSSLSSGKENRDTGKCRKGG) is disordered. Positions 342–356 (SDSAANGENSSLSSG) are enriched in polar residues. The PH 2 domain occupies 409–503 (EVPCCGYLSV…WLGLLLAQTG (95 aa)). Residues 602–690 (KTRAEEDARK…TEVKENLKKS (89 aa)) adopt a coiled-coil conformation. Positions 692–758 (AGGPTLGLAV…KAKEWEKKKP (67 aa)) are disordered. Over residues 749–758 (KAKEWEKKKP) the composition is skewed to basic and acidic residues.

It is found in the cytoplasm. It localises to the cell projection. The protein localises to the podosome. The protein resides in the invadopodium. Its subcellular location is the cytoskeleton. It is found in the stress fiber. Its function is as follows. May be involved in podosome and invadosome formation. The chain is Actin filament-associated protein 1-like 1 (afap1l1) from Xenopus tropicalis (Western clawed frog).